The primary structure comprises 130 residues: Small ribosomal subunit protein uS9 (130 aa).

This sequence belongs to the universal ribosomal protein uS9 family.

The polypeptide is Small ribosomal subunit protein uS9 (Pseudomonas syringae pv. tomato (strain ATCC BAA-871 / DC3000)).